A 335-amino-acid polypeptide reads, in one-letter code: Thioredoxin reductase (335 aa).

FAD is bound by residues Ser22–Ala25, Glu44–Ala51, Asn60, and Val93. Cysteines 145 and 148 form a disulfide. Residues Ser166, His185, Arg191, Ile248, and Tyr268 each coordinate NADP(+). FAD-binding positions include Asp288 and Arg295–Val298. NADP(+) is bound at residue Arg295.

This sequence belongs to the class-II pyridine nucleotide-disulfide oxidoreductase family. As to quaternary structure, homodimer. FAD is required as a cofactor.

It is found in the cytoplasm. It catalyses the reaction [thioredoxin]-dithiol + NADP(+) = [thioredoxin]-disulfide + NADPH + H(+). This Mycobacterium tuberculosis (strain CDC 1551 / Oshkosh) protein is Thioredoxin reductase.